Here is a 173-residue protein sequence, read N- to C-terminus: Lipoprotein signal peptidase (173 aa).

The next 4 membrane-spanning stretches (helical) occupy residues 7–27 (FFWF…LWVV), 41–61 (LWPG…FSLF), 70–90 (WLSL…PNFN), and 95–115 (AGYG…FVAG). Active-site residues include D119 and D135. Residues 130–150 (IFNLADVFINIGIICLLIAAW) form a helical membrane-spanning segment.

The protein belongs to the peptidase A8 family.

The protein localises to the cell inner membrane. The enzyme catalyses Release of signal peptides from bacterial membrane prolipoproteins. Hydrolyzes -Xaa-Yaa-Zaa-|-(S,diacylglyceryl)Cys-, in which Xaa is hydrophobic (preferably Leu), and Yaa (Ala or Ser) and Zaa (Gly or Ala) have small, neutral side chains.. The protein operates within protein modification; lipoprotein biosynthesis (signal peptide cleavage). This protein specifically catalyzes the removal of signal peptides from prolipoproteins. The protein is Lipoprotein signal peptidase of Cyanothece sp. (strain PCC 7425 / ATCC 29141).